A 20-amino-acid chain; its full sequence is EAGEECDCGTPENPCCDAAT.

In terms of domain architecture, Disintegrin spans 1–20; it reads EAGEECDCGTPENPCCDAAT. Cystine bridges form between Cys-6–Cys-15 and Cys-8–Cys-16.

This sequence belongs to the venom metalloproteinase (M12B) family. P-II subfamily. P-IIa sub-subfamily. In terms of assembly, monomer. Expressed by the venom gland.

Its subcellular location is the secreted. In terms of biological role, inhibits fibrinogen interaction with platelets. Acts by binding to alpha-IIb/beta-3 (ITGA2B/ITGB3) on the platelet surface and inhibits aggregation induced by ADP, thrombin, platelet-activating factor and collagen. The sequence is that of Disintegrin from Bothrops fonsecai (Fonseca's lancehead).